We begin with the raw amino-acid sequence, 363 residues long: Zinc phosphodiesterase ELAC protein 1 (363 aa).

His-62, His-64, Asp-66, His-67, His-182, Asp-253, and His-313 together coordinate Zn(2+). The active-site Proton acceptor is the Asp-66.

Belongs to the RNase Z family. As to quaternary structure, homodimer. Zn(2+) serves as cofactor.

The protein localises to the cytoplasm. Its subcellular location is the cytosol. It localises to the nucleus. The catalysed reaction is Endonucleolytic cleavage of RNA, removing extra 3' nucleotides from tRNA precursor, generating 3' termini of tRNAs. A 3'-hydroxy group is left at the tRNA terminus and a 5'-phosphoryl group is left at the trailer molecule.. Zinc phosphodiesterase, which displays some tRNA 3'-processing endonuclease activity. Specifically involved in tRNA repair: acts downstream of the ribosome-associated quality control (RQC) pathway by removing a 2',3'-cyclic phosphate from tRNAs following cleavage by ANKZF1. tRNAs are then processed by TRNT1. The protein is Zinc phosphodiesterase ELAC protein 1 (ELAC1) of Bos taurus (Bovine).